We begin with the raw amino-acid sequence, 312 residues long: MKHLIGLQGMAAESIKEILDRAALHKHLFINQENAIRPSLKGKRIALAFFENSTRTRFSFEIAARNLGAQTLNFSASSSSLSKGESMIDTIRNLEAMRVDAFIIRHPSSGSAEMIGKSTDKHVINAGDGSREHPTQALLDIFTLREYFGSLEGIKVMILGDILHSRVARSNIFGLTTLGAEVAVCGPATLLPVDTSRLGIRIFSQLDEALGWADAAIVLRLQLERATGGYLPSLQDYSFTFGLTDERLEKIKKHLPVLHPGPINREIEISGNVADRIQPPGFSQSMLLEQVTNGVAVRTAVLELLISPQPDT.

Carbamoyl phosphate is bound by residues Arg-55 and Thr-56. An L-aspartate-binding site is contributed by Lys-83. Carbamoyl phosphate contacts are provided by Arg-105, His-133, and Gln-136. L-aspartate is bound by residues Arg-166 and Arg-220. Carbamoyl phosphate contacts are provided by Gly-261 and Pro-262.

The protein belongs to the aspartate/ornithine carbamoyltransferase superfamily. ATCase family. In terms of assembly, heterododecamer (2C3:3R2) of six catalytic PyrB chains organized as two trimers (C3), and six regulatory PyrI chains organized as three dimers (R2).

The enzyme catalyses carbamoyl phosphate + L-aspartate = N-carbamoyl-L-aspartate + phosphate + H(+). It participates in pyrimidine metabolism; UMP biosynthesis via de novo pathway; (S)-dihydroorotate from bicarbonate: step 2/3. Its function is as follows. Catalyzes the condensation of carbamoyl phosphate and aspartate to form carbamoyl aspartate and inorganic phosphate, the committed step in the de novo pyrimidine nucleotide biosynthesis pathway. The chain is Aspartate carbamoyltransferase catalytic subunit from Prosthecochloris aestuarii (strain DSM 271 / SK 413).